A 327-amino-acid chain; its full sequence is Cyclic AMP-responsive element-binding protein 1 (327 aa).

Disordered stretches follow at residues 1-27 (MTME…QMTV) and 94-113 (SEDS…RREI). The KID domain occupies 87 to 146 (QISTIAESEDSQESVDSVTDSQKRREILSRRPSYRKILNDLSSDAPGVPRIEEEKSEEET). Ser119 is modified (phosphoserine; by CaMK1, CaMK2, CaMK4, PKB/AKT1 or PKB/AKT2, RPS6KA3, RPS6KA4, RPS6KA5 and SGK1). Lys122 participates in a covalent cross-link: Glycyl lysine isopeptide (Lys-Gly) (interchain with G-Cter in SUMO2). Residues 126-151 (DLSSDAPGVPRIEEEKSEEETSAPAI) are disordered. At Ser128 the chain carries Phosphoserine; by CaMK2. Residue Ser257 is modified to Phosphoserine; by HIPK2. The bZIP domain occupies 269 to 327 (ARKREVRLMKNREAARECRRKKKEYVKCLENRVAVLENQNKTLIEELKALKDLYCHKSD). The tract at residues 270–295 (RKREVRLMKNREAARECRRKKKEYVK) is basic motif. Glycyl lysine isopeptide (Lys-Gly) (interchain with G-Cter in SUMO1) cross-links involve residues Lys271 and Lys290. Residues 297-318 (LENRVAVLENQNKTLIEELKAL) form a leucine-zipper region.

The protein belongs to the bZIP family. Interacts with PPRC1. Binds DNA as a dimer. This dimer is stabilized by magnesium ions. Interacts, through the bZIP domain, with the coactivators CRTC1/TORC1, CRTC2/TORC2 and CRTC3/TORC3. Interacts (phosphorylated form) with TOX3. When phosphorylated on Ser-119, binds CREBBP. Interacts with ARRB1. Binds to HIPK2. Interacts with SGK1. Interacts with CREBL2; regulates CREB1 phosphorylation, stability and transcriptional activity. Interacts with TSSK4; this interaction facilitates phosphorylation on Ser-119. Forms a complex with KMT2A and CREBBP. Interacts with TOX4; CREB1 is required for full induction of TOX4-dependent activity and the interaction is increased by cAMP and inhibited by insulin. In terms of processing, phosphorylation of Ser-119 allows CREBBP binding. Stimulated by phosphorylation. Phosphorylated Ser-128 can be detected in the suprachiasmatic nucleus (SCN), the amygdala, the cortex, and the hippocampus but not in the striatum nor in the cerebellum. In the SCN, phosphorylation of Ser-128 and Ser-119 are stimulated by light exposure and submitted to circadian oscillations. In the retina, only phosphorylation of Ser-119 can be detected upon light exposure. Phosphorylation of both Ser-119 and Ser-128 in the SCN regulates the activity of CREB and participates in circadian rhythm generation. Phosphorylated upon calcium influx by CaMK4 and CaMK2 on Ser-119. CaMK4 is much more potent than CAMK2 in activating CREB. Phosphorylated by CaMK2 on Ser-128. Phosphorylation of Ser-128 blocks CREB-mediated transcription even when Ser-119 is phosphorylated. Phosphorylated by CaMK1. Phosphorylation of Ser-271 by HIPK2 in response to genotoxic stress promotes CREB1 activity, facilitating the recruitment of the coactivator CBP. Phosphorylated at Ser-119 by RPS6KA3, RPS6KA4 and RPS6KA5 in response to mitogenic or stress stimuli. CREBL2 positively regulates phosphorylation at Ser-119 thereby stimulating CREB1 transcriptional activity. In liver, phosphorylation is induced by fasting or glucagon in a circadian fashion. Phosphorylated by TSSK4 on Ser-119. Sumoylated with SUMO1. Sumoylation on Lys-290, but not on Lys-271, is required for nuclear localization of this protein. Sumoylation is enhanced under hypoxia, promoting nuclear localization and stabilization. In terms of tissue distribution, expressed in the heart (at protein level).

The protein localises to the nucleus. Functionally, phosphorylation-dependent transcription factor that stimulates transcription upon binding to the DNA cAMP response element (CRE), a sequence present in many viral and cellular promoters. Transcription activation is enhanced by the TORC coactivators which act independently of Ser-119 phosphorylation. Involved in different cellular processes including the synchronization of circadian rhythmicity and the differentiation of adipose cells. Regulates the expression of apoptotic and inflammatory response factors in cardiomyocytes in response to ERFE-mediated activation of AKT signaling. This chain is Cyclic AMP-responsive element-binding protein 1 (Creb1), found in Mus musculus (Mouse).